A 98-amino-acid polypeptide reads, in one-letter code: NADH-ubiquinone oxidoreductase chain 4L (98 aa).

The next 2 membrane-spanning stretches (helical) occupy residues 29-49 and 61-81; these read SLLC…LLIL and ILLL…LVTV.

The protein belongs to the complex I subunit 4L family. In terms of assembly, core subunit of respiratory chain NADH dehydrogenase (Complex I) which is composed of 45 different subunits.

The protein resides in the mitochondrion inner membrane. It catalyses the reaction a ubiquinone + NADH + 5 H(+)(in) = a ubiquinol + NAD(+) + 4 H(+)(out). Functionally, core subunit of the mitochondrial membrane respiratory chain NADH dehydrogenase (Complex I) which catalyzes electron transfer from NADH through the respiratory chain, using ubiquinone as an electron acceptor. Part of the enzyme membrane arm which is embedded in the lipid bilayer and involved in proton translocation. This Cheirogaleus medius (Fat-tailed dwarf lemur) protein is NADH-ubiquinone oxidoreductase chain 4L (MT-ND4L).